The chain runs to 278 residues: Pantothenate synthetase (278 aa).

Residue 30-37 (MGGLHQGH) coordinates ATP. Catalysis depends on His-37, which acts as the Proton donor. Gln-61 contributes to the (R)-pantoate binding site. Gln-61 lines the beta-alanine pocket. 146-149 (GQKD) contributes to the ATP binding site. Gln-152 contributes to the (R)-pantoate binding site. ATP contacts are provided by residues Ile-175 and 183–186 (MSTR).

Belongs to the pantothenate synthetase family. Homodimer.

The protein localises to the cytoplasm. It carries out the reaction (R)-pantoate + beta-alanine + ATP = (R)-pantothenate + AMP + diphosphate + H(+). Its pathway is cofactor biosynthesis; (R)-pantothenate biosynthesis; (R)-pantothenate from (R)-pantoate and beta-alanine: step 1/1. Functionally, catalyzes the condensation of pantoate with beta-alanine in an ATP-dependent reaction via a pantoyl-adenylate intermediate. This chain is Pantothenate synthetase, found in Ruthia magnifica subsp. Calyptogena magnifica.